The primary structure comprises 87 residues: Translation initiation factor IF-1 2 (87 aa).

Residues 1-72 (MAKEELLELD…TKGRINFRHK (72 aa)) form the S1-like domain.

Belongs to the IF-1 family. As to quaternary structure, component of the 30S ribosomal translation pre-initiation complex which assembles on the 30S ribosome in the order IF-2 and IF-3, IF-1 and N-formylmethionyl-tRNA(fMet); mRNA recruitment can occur at any time during PIC assembly.

Its subcellular location is the cytoplasm. In terms of biological role, one of the essential components for the initiation of protein synthesis. Stabilizes the binding of IF-2 and IF-3 on the 30S subunit to which N-formylmethionyl-tRNA(fMet) subsequently binds. Helps modulate mRNA selection, yielding the 30S pre-initiation complex (PIC). Upon addition of the 50S ribosomal subunit IF-1, IF-2 and IF-3 are released leaving the mature 70S translation initiation complex. This chain is Translation initiation factor IF-1 2, found in Burkholderia ambifaria (strain ATCC BAA-244 / DSM 16087 / CCUG 44356 / LMG 19182 / AMMD) (Burkholderia cepacia (strain AMMD)).